Here is a 431-residue protein sequence, read N- to C-terminus: Isochorismate synthase MenF (431 aa).

Lys183 acts as the Proton acceptor in catalysis. Residue Glu233 is the Proton donor of the active site. Glu277 and Glu414 together coordinate Mg(2+).

It belongs to the isochorismate synthase family. It depends on Mg(2+) as a cofactor.

It catalyses the reaction chorismate = isochorismate. It participates in quinol/quinone metabolism; 1,4-dihydroxy-2-naphthoate biosynthesis; 1,4-dihydroxy-2-naphthoate from chorismate: step 1/7. Its pathway is quinol/quinone metabolism; menaquinone biosynthesis. In terms of biological role, catalyzes the conversion of chorismate to isochorismate. The protein is Isochorismate synthase MenF of Pasteurella multocida (strain Pm70).